A 137-amino-acid polypeptide reads, in one-letter code: Ribosome-binding factor A (137 aa).

Residues 112 to 137 (KKDEVKEDESHEDESTDHTEETNEEP) are disordered. Residues 127–137 (TDHTEETNEEP) show a composition bias toward basic and acidic residues.

The protein belongs to the RbfA family. In terms of assembly, monomer. Binds 30S ribosomal subunits, but not 50S ribosomal subunits or 70S ribosomes.

It is found in the cytoplasm. Its function is as follows. One of several proteins that assist in the late maturation steps of the functional core of the 30S ribosomal subunit. Associates with free 30S ribosomal subunits (but not with 30S subunits that are part of 70S ribosomes or polysomes). Required for efficient processing of 16S rRNA. May interact with the 5'-terminal helix region of 16S rRNA. The polypeptide is Ribosome-binding factor A (Coprothermobacter proteolyticus (strain ATCC 35245 / DSM 5265 / OCM 4 / BT)).